A 143-amino-acid chain; its full sequence is MAIYGIGTDLAQVSRIAAVLERTGGRFAEKVLGPDELRVFHARRARSEARGIAFLATRFSAKEAFSKAIGLGMHWPMTWRALQTLNRPSGEPYVVASGELAAWLDARGITARVTVSDERDYAVTFVVAEAPDDVAAARSGAAS.

Asp-9 and Glu-63 together coordinate Mg(2+).

Belongs to the P-Pant transferase superfamily. AcpS family. It depends on Mg(2+) as a cofactor.

The protein localises to the cytoplasm. It catalyses the reaction apo-[ACP] + CoA = holo-[ACP] + adenosine 3',5'-bisphosphate + H(+). Transfers the 4'-phosphopantetheine moiety from coenzyme A to a Ser of acyl-carrier-protein. This chain is Holo-[acyl-carrier-protein] synthase, found in Burkholderia mallei (strain NCTC 10247).